The chain runs to 338 residues: Eukaryotic translation initiation factor 3 subunit H (338 aa).

Residues 22-154 form the MPN domain; the sequence is VQCDGLAVMK…LKAYRLTPQA (133 aa).

This sequence belongs to the eIF-3 subunit H family. As to quaternary structure, component of the eukaryotic translation initiation factor 3 (eIF-3) complex. The eIF-3 complex interacts with pix. Interacts with mxt.

Its subcellular location is the cytoplasm. Its function is as follows. Component of the eukaryotic translation initiation factor 3 (eIF-3) complex, which is involved in protein synthesis of a specialized repertoire of mRNAs and, together with other initiation factors, stimulates binding of mRNA and methionyl-tRNAi to the 40S ribosome. The eIF-3 complex specifically targets and initiates translation of a subset of mRNAs involved in cell proliferation. The chain is Eukaryotic translation initiation factor 3 subunit H from Drosophila yakuba (Fruit fly).